The primary structure comprises 277 residues: UBX domain-containing protein 10 (277 aa).

The tract at residues 1–102 is disordered; the sequence is MAIEAPVNFA…APDEMPELLL (102 aa). Residues 16–31 are compositionally biased toward polar residues; it reads TVVSTAGDSSTWQPSS. Residues 35-50 are compositionally biased toward basic residues; that stretch reads HVIRPKSAKGRKRPNL. The segment covering 60 to 77 has biased composition (low complexity); sequence SPSALSSSPPPRSSGSPS. Position 88 is a phosphoserine (serine 88). The UBX domain occupies 191 to 268; the sequence is DEEPRLLLAV…GILHKSVLGI (78 aa).

It belongs to the UBXN10 family. In terms of assembly, interacts with CLUAP1; the interaction is direct and mediates interaction with the intraflagellar transport complex B (IFT-B). Interacts with VCP; the interaction is direct.

The protein resides in the cell projection. The protein localises to the cilium. Functionally, VCP/p97-binding protein required for ciliogenesis. Acts as a tethering factor that facilitates recruitment of VCP/p97 to the intraflagellar transport complex B (IFT-B) in cilia. UBX domain-containing proteins act as tethering factors for VCP/p97 and may specify substrate specificity of VCP/p97. In Mus musculus (Mouse), this protein is UBX domain-containing protein 10.